The primary structure comprises 66 residues: Large ribosomal subunit protein bL35 (66 aa).

The segment at Ser19–Arg45 is disordered. Residues Thr28–Arg45 show a composition bias toward basic residues.

Belongs to the bacterial ribosomal protein bL35 family.

This is Large ribosomal subunit protein bL35 from Anaplasma phagocytophilum (strain HZ).